The chain runs to 889 residues: MEAALADGEPDRSSLLGDSKDVLGPSTVVANSDEPQHLTPGKMSQRQGRDANPTPTRDLPQPSLSPASLHSQGFERGKEDISQNKDDSSLSMSKSKSESKLYNGSEKDSSTSSKLTKKESLKVQKKNYREEKKRATKELLSTITDPSVIVMADWLKIRGTLKSWTKLWCVLKPGVLLIYKTQKNGQWVGTVLLNACEIIERPSKKDGFCFKLFHPLEQSIWAVKGPKGEAVGSITQPLPSSYLIIRATSESDGRCWMDALELALKCSSLLKRTMVREGKEHDLSISSDSTHVTLYGLLRANNLHSGDNFQLNDSEIERQHFKDQDLYSDKSDKENDPEHDESDNEVLGKSEESDTDTSERQDDSYIDPEPVEPLKETTYMEQSHEELGEAGEASQTETVSEENKSLIWTLLKQVRPGMDLSRVVLPTFILEPRSFLDKLSDYYYHADFLSEAALEENPYFRLKKVVKWYLSGFYKKPKGLKKPYNPILGETFRCLWIHPRTNSKTFYIAEQVSHHPPISAFYVSNRKDGFCLSGSILAKSKFYGNSLSAILEGEARLTFLNRGEDYVMTMPYAHCKGILYGTMTLELGGTVNITCQKTGYSAILEFKLKPFLGSSDYVNQISGKLKLGKEVLATLEGHWDSEVFINDKKTDNSEIFWNPTPDIKQWRLIRHTVKFEEQDDFESEKLWQRVTKAINAKDQTEATQEKYVLEEAQRQAARDRKTKTQEWVCKLFELDPLTGEWHYKFSDTRPWDPLNDMIQFEKDGVIQTKVKHRTPMVSVPKMKHKPTRQQKKVVKGYSSPEPDIQDSSGSEAQSVKPSTRRKKGIDLGDIQSSIESIKQTQEEIKRNIMALRNHLLSSTPATDYFLQQKDYFVIFLLILLQVIINFIFK.

Met-1 carries the N-acetylmethionine modification. The interval 1–129 (MEAALADGEP…SLKVQKKNYR (129 aa)) is disordered. Phosphoserine is present on residues Ser-14, Ser-65, and Ser-68. Residues 62–71 (PSLSPASLHS) are compositionally biased toward polar residues. Composition is skewed to basic and acidic residues over residues 73–88 (GFER…KDDS), 95–109 (SKSE…EKDS), and 116–129 (TKKE…KNYR). A PH domain is found at 148 to 265 (VIVMADWLKI…WMDALELALK (118 aa)). Phosphoserine is present on residues Ser-314, Ser-328, and Ser-342. A compositionally biased stretch (basic and acidic residues) spans 321 to 336 (FKDQDLYSDKSDKEND). The interval 321-374 (FKDQDLYSDKSDKENDPEHDESDNEVLGKSEESDTDTSERQDDSYIDPEPVEPL) is disordered. Residues 346 to 363 (VLGKSEESDTDTSERQDD) show a composition bias toward basic and acidic residues. A 1,2-diacyl-sn-glycero-3-phospho-(1D-myo-inositol 4-phosphate)-binding positions include 420–425 (LSRVVL), 482–485 (KPYN), and 514–515 (HH). A 1,2-diacyl-sn-glycero-3-phospho-L-serine-binding positions include 420-425 (LSRVVL) and Asn-485. Ser-540 is an a 1,2-diacyl-sn-glycero-3-phospho-L-serine binding site. Positions 706, 710, and 714 each coordinate a 1,2-diacyl-sn-glycero-3-phospho-(1D-myo-inositol 4-phosphate). Residues 772–823 (HRTPMVSVPKMKHKPTRQQKKVVKGYSSPEPDIQDSSGSEAQSVKPSTRRKK) are disordered. A compositionally biased stretch (basic residues) spans 781 to 794 (KMKHKPTRQQKKVV). Residues 805 to 817 (QDSSGSEAQSVKP) show a composition bias toward polar residues. Residues Ser-807, Ser-808, Ser-810, and Ser-814 each carry the phosphoserine modification. The chain crosses the membrane as a helical span at residues 871–888 (YFVIFLLILLQVIINFIF).

Belongs to the OSBP family. In terms of assembly, interacts with SPAG5. Interacts with NUP62. Widely expressed. Most abundant in liver, spleen, kidney, brain and adipose tissue.

The protein localises to the endoplasmic reticulum membrane. It localises to the nucleus membrane. In terms of biological role, lipid transporter involved in lipid countertransport between the endoplasmic reticulum and the plasma membrane: specifically exchanges phosphatidylserine with phosphatidylinositol 4-phosphate (PI4P), delivering phosphatidylserine to the plasma membrane in exchange for PI4P, which is degraded by the SAC1/SACM1L phosphatase in the endoplasmic reticulum. Binds phosphatidylserine and PI4P in a mutually exclusive manner. Binds oxysterol, 25-hydroxycholesterol and cholesterol. This is Oxysterol-binding protein-related protein 8 from Mus musculus (Mouse).